A 240-amino-acid chain; its full sequence is Large ribosomal subunit protein uL1c (240 aa).

This sequence belongs to the universal ribosomal protein uL1 family. As to quaternary structure, part of the 50S ribosomal subunit.

The protein resides in the plastid. It is found in the chloroplast. In terms of biological role, binds directly to 23S rRNA. Might be involved in E site tRNA release (Potential). The chain is Large ribosomal subunit protein uL1c (rpl1) from Cyanidium caldarium (Red alga).